The sequence spans 259 residues: Imidazole glycerol phosphate synthase subunit HisF (259 aa).

Residues Asp-11 and Asp-130 contribute to the active site.

The protein belongs to the HisA/HisF family. As to quaternary structure, heterodimer of HisH and HisF.

It is found in the cytoplasm. The enzyme catalyses 5-[(5-phospho-1-deoxy-D-ribulos-1-ylimino)methylamino]-1-(5-phospho-beta-D-ribosyl)imidazole-4-carboxamide + L-glutamine = D-erythro-1-(imidazol-4-yl)glycerol 3-phosphate + 5-amino-1-(5-phospho-beta-D-ribosyl)imidazole-4-carboxamide + L-glutamate + H(+). The protein operates within amino-acid biosynthesis; L-histidine biosynthesis; L-histidine from 5-phospho-alpha-D-ribose 1-diphosphate: step 5/9. IGPS catalyzes the conversion of PRFAR and glutamine to IGP, AICAR and glutamate. The HisF subunit catalyzes the cyclization activity that produces IGP and AICAR from PRFAR using the ammonia provided by the HisH subunit. This Desulfosudis oleivorans (strain DSM 6200 / JCM 39069 / Hxd3) (Desulfococcus oleovorans) protein is Imidazole glycerol phosphate synthase subunit HisF.